The sequence spans 39 residues: Potassium channel toxin alpha-KTx 2.2 (39 aa).

3 disulfides stabilise this stretch: Cys7–Cys29, Cys13–Cys34, and Cys17–Cys36. Positions 37–39 (YPH) are interaction with Kv1.3 channels.

It belongs to the short scorpion toxin superfamily. Potassium channel inhibitor family. Alpha-KTx 02 subfamily. In terms of tissue distribution, expressed by the venom gland.

The protein localises to the secreted. In terms of biological role, potent inhibitor of voltage-gated potassium channels such as Kv1.1/KCNA1 (IC(50)=0.144 nM), Kv1.2/KCNA2 (IC(50)=0.675 nM), Kv1.3/KCNA3 (IC(50)=0.23 nM) and Shaker (Kd=160 nM). Suppresses expression of the Kv1.3/KCNA3 channel in lipopolysaccharide (LPS)-stimulated mouse macrophages. Down-regulates secretion of nitric oxide (NO) and inflammatory cytokines, such as TNF-alpha/TNF, IL-1beta/IL1B and IL6, in LPS-stimulated mouse macrophages in a manner dependent on Kv1.3/KCNA3 channel blockage. Reduces activation of MAPK and NF-kappa-B signaling pathways in LPS-stimulated mouse macrophages. Modulates intracellular Ca(2+) signaling in human PMA/ionomycin-triggered T-cells. Interferes with the activation of the MAPK, NF-kappa-B and NFATc1 pathways in human PMA/ionomycin-triggered T-cells. Reduces proliferation of human PMA/ionomycin-triggered T-cells. Down-regulates secretion of cytokines, such as TNF-alpha/TNF and IL2, in human PMA/ionomycin-triggered T-cells. This Centruroides margaritatus (Central American bark Scorpion) protein is Potassium channel toxin alpha-KTx 2.2.